A 142-amino-acid polypeptide reads, in one-letter code: Phosphoribosyl-AMP cyclohydrolase (142 aa).

Asp-92 is a binding site for Mg(2+). Position 93 (Cys-93) interacts with Zn(2+). Asp-94 and Asp-96 together coordinate Mg(2+). The Zn(2+) site is built by Cys-109 and Cys-116.

It belongs to the PRA-CH family. Homodimer. Mg(2+) serves as cofactor. Requires Zn(2+) as cofactor.

Its subcellular location is the cytoplasm. It catalyses the reaction 1-(5-phospho-beta-D-ribosyl)-5'-AMP + H2O = 1-(5-phospho-beta-D-ribosyl)-5-[(5-phospho-beta-D-ribosylamino)methylideneamino]imidazole-4-carboxamide. It functions in the pathway amino-acid biosynthesis; L-histidine biosynthesis; L-histidine from 5-phospho-alpha-D-ribose 1-diphosphate: step 3/9. Functionally, catalyzes the hydrolysis of the adenine ring of phosphoribosyl-AMP. The protein is Phosphoribosyl-AMP cyclohydrolase of Alcanivorax borkumensis (strain ATCC 700651 / DSM 11573 / NCIMB 13689 / SK2).